Here is a 489-residue protein sequence, read N- to C-terminus: Glucose-6-phosphate 1-dehydrogenase (489 aa).

NADP(+) contacts are provided by residues 15-22, Arg49, 86-87, and Lys149; these read GATGDLAK and DV. The substrate site is built by His179, Lys183, Glu217, and Asp236. Residue His241 is the Proton acceptor of the active site. Residues Lys341 and Lys346 each contribute to the substrate site.

The protein belongs to the glucose-6-phosphate dehydrogenase family.

It carries out the reaction D-glucose 6-phosphate + NADP(+) = 6-phospho-D-glucono-1,5-lactone + NADPH + H(+). The protein operates within carbohydrate degradation; pentose phosphate pathway; D-ribulose 5-phosphate from D-glucose 6-phosphate (oxidative stage): step 1/3. Its function is as follows. Catalyzes the oxidation of glucose 6-phosphate to 6-phosphogluconolactone. In Bacillus subtilis (strain 168), this protein is Glucose-6-phosphate 1-dehydrogenase.